Consider the following 195-residue polypeptide: NADH-quinone oxidoreductase subunit I (195 aa).

4Fe-4S ferredoxin-type domains lie at 44–74 and 90–119; these read LNRY…VEGA and QVYQ…MTNE. [4Fe-4S] cluster is bound by residues Cys-54, Cys-57, Cys-60, Cys-64, Cys-99, Cys-102, Cys-105, and Cys-109. The disordered stretch occupies residues 145 to 195; that stretch reads MTAPPHALRPGTTQDDYYRGDITAVPEQAAPEQAAPEQPAPEREPNPETEK. Residues 168-181 show a composition bias toward low complexity; it reads AVPEQAAPEQAAPE. A compositionally biased stretch (basic and acidic residues) spans 184 to 195; that stretch reads APEREPNPETEK.

The protein belongs to the complex I 23 kDa subunit family. As to quaternary structure, NDH-1 is composed of 14 different subunits. Subunits NuoA, H, J, K, L, M, N constitute the membrane sector of the complex. [4Fe-4S] cluster serves as cofactor.

It is found in the cell membrane. It carries out the reaction a quinone + NADH + 5 H(+)(in) = a quinol + NAD(+) + 4 H(+)(out). Functionally, NDH-1 shuttles electrons from NADH, via FMN and iron-sulfur (Fe-S) centers, to quinones in the respiratory chain. The immediate electron acceptor for the enzyme in this species is believed to be ubiquinone. Couples the redox reaction to proton translocation (for every two electrons transferred, four hydrogen ions are translocated across the cytoplasmic membrane), and thus conserves the redox energy in a proton gradient. This is NADH-quinone oxidoreductase subunit I from Rhodococcus erythropolis (strain PR4 / NBRC 100887).